The primary structure comprises 377 residues: Homoserine O-acetyltransferase (377 aa).

The AB hydrolase-1 domain maps to 48–347 (NVVLIEHALT…PVGHDAFLTE (300 aa)). The active-site Nucleophile is the S143. A substrate-binding site is contributed by R213. Catalysis depends on residues D311 and H341. Residue D342 participates in substrate binding.

The protein belongs to the AB hydrolase superfamily. MetX family. As to quaternary structure, homodimer.

The protein localises to the cytoplasm. It carries out the reaction L-homoserine + acetyl-CoA = O-acetyl-L-homoserine + CoA. The protein operates within amino-acid biosynthesis; L-methionine biosynthesis via de novo pathway; O-acetyl-L-homoserine from L-homoserine: step 1/1. Its function is as follows. Transfers an acetyl group from acetyl-CoA to L-homoserine, forming acetyl-L-homoserine. This chain is Homoserine O-acetyltransferase, found in Corynebacterium glutamicum (strain ATCC 13032 / DSM 20300 / JCM 1318 / BCRC 11384 / CCUG 27702 / LMG 3730 / NBRC 12168 / NCIMB 10025 / NRRL B-2784 / 534).